The sequence spans 232 residues: Fibrillarin-like rRNA/tRNA 2'-O-methyltransferase (232 aa).

Residues 89 to 90 (TT), 108 to 109 (EF), 133 to 134 (DA), and 153 to 156 (DIAQ) contribute to the S-adenosyl-L-methionine site.

The protein belongs to the methyltransferase superfamily. Fibrillarin family. As to quaternary structure, interacts with nop5. Component of box C/D small ribonucleoprotein (sRNP) particles that contain rpl7ae, FlpA and nop5, plus a guide RNA. These sRNP particles form homodimers, giving rise to an asymmetric holoenzyme.

In terms of biological role, involved in pre-rRNA and tRNA processing. Utilizes the methyl donor S-adenosyl-L-methionine to catalyze the site-specific 2'-hydroxyl methylation of ribose moieties in rRNA and tRNA. Site specificity is provided by a guide RNA that base pairs with the substrate. Methylation occurs at a characteristic distance from the sequence involved in base pairing with the guide RNA. This chain is Fibrillarin-like rRNA/tRNA 2'-O-methyltransferase, found in Saccharolobus solfataricus (strain ATCC 35092 / DSM 1617 / JCM 11322 / P2) (Sulfolobus solfataricus).